Here is a 472-residue protein sequence, read N- to C-terminus: Protein PIN-LIKES 1 (472 aa).

Residues 1–93 (MSLTQSAKLH…FYSMRMRLLD (93 aa)) are Lumenal-facing. The helical transmembrane segment at 94 to 114 (LFITSSIPVAKILLITGIGFY) threads the bilayer. Topologically, residues 115–133 (LALDQVNILNHDARKQLNN) are cytoplasmic. Residues 134–154 (IVFYVFSPSLVASSLSETITY) traverse the membrane as a helical segment. Residues 155–161 (ESMVKMW) are Lumenal-facing. The chain crosses the membrane as a helical span at residues 162-182 (FMPLNVLLTFIIGSFLGWIVI). Over 183–193 (KITKPPSHLRG) the chain is Cytoplasmic. The chain crosses the membrane as a helical span at residues 194 to 214 (IIVGCCAAGNLGNMPLIIIPA). The Lumenal segment spans residues 215 to 231 (ICNEKGSPFGDPESCEK). Residues 232–252 (FGLGYIALSMAIGAIYIWTYV) form a helical membrane-spanning segment. Over 253 to 309 (YNLMRMLANPAGETAINSTSSTMPLISPKVEVAEQVGTWGKVKQRVCSVAEKINLRT) the chain is Cytoplasmic. Residues 310 to 330 (IFAPSTIAALIALAVGLNPLL) traverse the membrane as a helical segment. The Lumenal segment spans residues 331–347 (RKLLVGNTAPLRVIEDS). A helical transmembrane segment spans residues 348–368 (VSLLGDGAIPVLTLIVGGNLL). Topologically, residues 369–379 (NGLRGSGINKS) are cytoplasmic. A helical transmembrane segment spans residues 380–400 (VIMGVVVVRYLLLPILGVFIV). Topologically, residues 401 to 413 (RGAHYLGLVTSEP) are lumenal. The helical transmembrane segment at 414-434 (LYQFVLLLQYVVPPAMNLGTI) threads the bilayer. The Cytoplasmic segment spans residues 435 to 446 (TQLFGSGESECS). The chain crosses the membrane as a helical span at residues 447–467 (VILFWSYALASVSLTVWPTFF). Residues 468–472 (MWLVA) are Lumenal-facing.

Belongs to the auxin efflux carrier (TC 2.A.69.2) family. In terms of tissue distribution, expressed in flowers.

The protein resides in the endoplasmic reticulum membrane. Its function is as follows. Involved in cellular auxin homeostasis by regulating auxin metabolism. Regulates intracellular auxin accumulation at the endoplasmic reticulum and thus auxin availability for nuclear auxin signaling. This Arabidopsis thaliana (Mouse-ear cress) protein is Protein PIN-LIKES 1.